Here is a 1219-residue protein sequence, read N- to C-terminus: NHS-like protein 2 (1219 aa).

10 disordered regions span residues 162-181 (FRSS…QSAK), 288-321 (FSNF…HSAP), 336-364 (FPSL…SDHP), 400-423 (TPSA…GNSW), 474-591 (GLLA…ELVL), 669-741 (QGSS…SASV), 854-938 (GAEE…STAS), 979-1003 (IGLQ…KKPS), 1033-1087 (LEED…DKTA), and 1121-1197 (WKET…KTTN). The segment covering 288–312 (FSNFSQRDQGHSSSPTGSLARSATS) has biased composition (polar residues). Residues 352-364 (GDAHQARSASDHP) are compositionally biased toward basic and acidic residues. Position 499 is a phosphoserine (Ser499). The span at 526 to 545 (ASTSSEGSNSTDNIAALSTE) shows a compositional bias: polar residues. Residues 549-567 (RHRRQRSKSISLKKAKKKP) are compositionally biased toward basic residues. Ser575 is subject to Phosphoserine. Positions 674-687 (SLASPSTSRATTPS) are enriched in low complexity. Ser690 is subject to Phosphoserine. Composition is skewed to polar residues over residues 708-729 (MSPS…SMSL) and 897-908 (TSPTMAMASRSS). Position 1048 is a phosphoserine (Ser1048). A compositionally biased stretch (basic and acidic residues) spans 1076-1087 (AEEKSLISDKTA). Polar residues predominate over residues 1131–1144 (SKPSSHSPVKNTAD). The span at 1145 to 1160 (SPTGEAAAAPGPSSSA) shows a compositional bias: low complexity. At Ser1208 the chain carries Phosphoserine.

It belongs to the NHS family.

This chain is NHS-like protein 2, found in Mus musculus (Mouse).